The sequence spans 433 residues: Signal recognition particle 54 kDa protein (433 aa).

Residues 106–113, 186–190, and 244–247 each bind GTP; these read GVEGSGKT, DTAGR, and TKMD.

The protein belongs to the GTP-binding SRP family. SRP54 subfamily. In terms of assembly, part of the signal recognition particle protein translocation system, which is composed of SRP and FtsY. Archaeal SRP consists of a 7S RNA molecule of 300 nucleotides and two protein subunits: SRP54 and SRP19.

The protein resides in the cytoplasm. It carries out the reaction GTP + H2O = GDP + phosphate + H(+). In terms of biological role, involved in targeting and insertion of nascent membrane proteins into the cytoplasmic membrane. Binds to the hydrophobic signal sequence of the ribosome-nascent chain (RNC) as it emerges from the ribosomes. The SRP-RNC complex is then targeted to the cytoplasmic membrane where it interacts with the SRP receptor FtsY. In Pyrobaculum aerophilum (strain ATCC 51768 / DSM 7523 / JCM 9630 / CIP 104966 / NBRC 100827 / IM2), this protein is Signal recognition particle 54 kDa protein.